The sequence spans 540 residues: MSILRGSLRGVLAPNASVVFRSRLPPQLTSALLCPLRSLSGTPLAEPDGKVTRKMSENGTCNRILTLDSMNPCIQKVEYAVRGPIVIRAVELEKELQQGVKKPFTEVIKANIGDAHAMGQKPVTFLRQVSAICLYPELMNDNKFPEDVKQKAARILQACGGHSIGAYSASQGIEVIRQDVAKYIERRDGGILSDPNNIYLSTGASDSIVTMLKLLVSGQGKSRTGVMIPIPQYPLYSAALAELDAVQVNYYLDEENCWALDINELRRALAEARKHCDPKVLCIINPGNPTGQVQSRKCIEDVIRFAAEENLFLMADEVYQDNVYAKGCAFHSFKKVLFEMGPKYSETLELASFHSTSKGYMGECGFRGGYMEVINMDPAVKQQLTKLVSVRLCPPVPGQVLLDVIVNPPKPGEPSYKQFISEKQAVLNNLAEKARLTEEILNQAPGIRCNPVQGAMYSFPRIHIPEKAIKLAQAEGQAPDMFFCMKLLEETGICVVPGSGFGQREGTHHFRMTILPPTDKLKSLLERLKDFHQKFMDEYS.

Lysine 358 bears the N6-(pyridoxal phosphate)lysine mark.

It belongs to the class-I pyridoxal-phosphate-dependent aminotransferase family. Alanine aminotransferase subfamily. As to quaternary structure, homodimer. The cofactor is pyridoxal 5'-phosphate.

The catalysed reaction is L-alanine + 2-oxoglutarate = pyruvate + L-glutamate. It participates in amino-acid degradation; L-alanine degradation via transaminase pathway; pyruvate from L-alanine: step 1/1. In terms of biological role, catalyzes the reversible transamination between alanine and 2-oxoglutarate to form pyruvate and glutamate. The chain is Alanine aminotransferase 2 (gpt2) from Xenopus laevis (African clawed frog).